We begin with the raw amino-acid sequence, 225 residues long: UPF0173 metal-dependent hydrolase PH1671 (225 aa).

It belongs to the UPF0173 family.

This is UPF0173 metal-dependent hydrolase PH1671 from Pyrococcus horikoshii (strain ATCC 700860 / DSM 12428 / JCM 9974 / NBRC 100139 / OT-3).